Reading from the N-terminus, the 71-residue chain is DNA-directed RNA polymerase subunit epsilon (71 aa).

The protein belongs to the RNA polymerase subunit epsilon family. In terms of assembly, monomer. RNAP is composed of a core of 2 alpha, a beta and a beta' subunit. The core is associated with a delta subunit, and at least one of epsilon or omega. When a sigma factor is associated with the core the holoenzyme is formed, which can initiate transcription.

The enzyme catalyses RNA(n) + a ribonucleoside 5'-triphosphate = RNA(n+1) + diphosphate. Functionally, a non-essential component of RNA polymerase (RNAP). Has a similar structure to bacteriophage T7 protein Gp2 (AC P03704), which is known to bind to RNAP in the DNA binding-cleft. Unlike Gp2 however, this protein does not inhibit transcription initiation. This Geobacillus stearothermophilus (strain DSM 13240 / CIP 106956 / 10) protein is DNA-directed RNA polymerase subunit epsilon.